The chain runs to 346 residues: Uroporphyrinogen decarboxylase (346 aa).

Substrate is bound by residues 26–30 (RQAGR), Asp76, Tyr153, Ser208, and His323.

The protein belongs to the uroporphyrinogen decarboxylase family. Homodimer.

The protein resides in the cytoplasm. It carries out the reaction uroporphyrinogen III + 4 H(+) = coproporphyrinogen III + 4 CO2. The protein operates within porphyrin-containing compound metabolism; protoporphyrin-IX biosynthesis; coproporphyrinogen-III from 5-aminolevulinate: step 4/4. Functionally, catalyzes the decarboxylation of four acetate groups of uroporphyrinogen-III to yield coproporphyrinogen-III. The sequence is that of Uroporphyrinogen decarboxylase from Prochlorococcus marinus (strain MIT 9312).